Here is a 703-residue protein sequence, read N- to C-terminus: DNA ligase (703 aa).

Residues 44-48 (DAEYD), 93-94 (SL), and E127 contribute to the NAD(+) site. K129 functions as the N6-AMP-lysine intermediate in the catalytic mechanism. R150, E186, K302, and K326 together coordinate NAD(+). Zn(2+) is bound by residues C420, C422, C444, and C450. Residues 625 to 703 (VADSPVAGKT…EDMWFQRIGA (79 aa)) enclose the BRCT domain.

It belongs to the NAD-dependent DNA ligase family. LigA subfamily. Mg(2+) is required as a cofactor. Mn(2+) serves as cofactor.

The enzyme catalyses NAD(+) + (deoxyribonucleotide)n-3'-hydroxyl + 5'-phospho-(deoxyribonucleotide)m = (deoxyribonucleotide)n+m + AMP + beta-nicotinamide D-nucleotide.. In terms of biological role, DNA ligase that catalyzes the formation of phosphodiester linkages between 5'-phosphoryl and 3'-hydroxyl groups in double-stranded DNA using NAD as a coenzyme and as the energy source for the reaction. It is essential for DNA replication and repair of damaged DNA. The protein is DNA ligase of Chelativorans sp. (strain BNC1).